A 153-amino-acid polypeptide reads, in one-letter code: Putative adenylate kinase (153 aa).

Residues G12, G14, K15, S16, and T17 each contribute to the ATP site. The NMP stretch occupies residues 31–47; it reads EGNELAKEYGCLFDEEV. An LID region spans residues 94 to 104; it reads ARGYSEEKIQE. R95 provides a ligand contact to ATP.

Belongs to the adenylate kinase family. AK6 subfamily. In terms of assembly, interacts with uS11. Not a structural component of 40S pre-ribosomes, but transiently interacts with them by binding to uS11.

The catalysed reaction is AMP + ATP = 2 ADP. It catalyses the reaction ATP + H2O = ADP + phosphate + H(+). Broad-specificity nucleoside monophosphate (NMP) kinase that catalyzes the reversible transfer of the terminal phosphate group between nucleoside triphosphates and monophosphates. Also has ATPase activity. Involved in the late maturation steps of the 30S ribosomal particles, specifically 16S rRNA maturation. While NMP activity is not required for ribosome maturation, ATPase activity is. Associates transiently with small ribosomal subunit protein uS11. ATP hydrolysis breaks the interaction with uS11. May temporarily remove uS11 from the ribosome to enable a conformational change of the ribosomal RNA that is needed for the final maturation step of the small ribosomal subunit. This is Putative adenylate kinase from Thermoplasma volcanium (strain ATCC 51530 / DSM 4299 / JCM 9571 / NBRC 15438 / GSS1).